We begin with the raw amino-acid sequence, 82 residues long: Defensin-like protein 75 (82 aa).

Positions 1–26 (MAKIKSLDVITVAIILLLVIADQATA) are cleaved as a signal peptide. 4 disulfide bridges follow: Cys-33–Cys-66, Cys-37–Cys-55, Cys-41–Cys-64, and Cys-45–Cys-65.

It belongs to the DEFL family.

It is found in the secreted. This chain is Defensin-like protein 75 (LCR45), found in Arabidopsis thaliana (Mouse-ear cress).